The following is a 37-amino-acid chain: Cytochrome b6-f complex subunit 7 (37 aa).

The chain crosses the membrane as a helical span at residues 11 to 29 (AVILMVLVLFGLAWGFLIL).

The protein belongs to the PetM family. In terms of assembly, the 4 large subunits of the cytochrome b6-f complex are cytochrome b6, subunit IV (17 kDa polypeptide, PetD), cytochrome f and the Rieske protein, while the 4 small subunits are PetG, PetL, PetM and PetN. The complex functions as a dimer.

Its subcellular location is the cellular thylakoid membrane. Functionally, component of the cytochrome b6-f complex, which mediates electron transfer between photosystem II (PSII) and photosystem I (PSI), cyclic electron flow around PSI, and state transitions. The polypeptide is Cytochrome b6-f complex subunit 7 (Crocosphaera subtropica (strain ATCC 51142 / BH68) (Cyanothece sp. (strain ATCC 51142))).